The sequence spans 51 residues: UPF0181 protein VVA0806 (51 aa).

The protein belongs to the UPF0181 family.

The protein is UPF0181 protein VVA0806 of Vibrio vulnificus (strain YJ016).